Consider the following 993-residue polypeptide: Replication protein 1a (993 aa).

Positions 50 to 408 are methyltransferase; that stretch reads RNALDVKDSE…TIVINGMAMQ (359 aa). Positions 72–289 constitute an Alphavirus-like MT domain; it reads HLTQQEQAPH…HKWENVKSFL (218 aa). The disordered stretch occupies residues 525 to 581; it reads AEDRKQKAEAASQIPVDEIPDDTAESSDDTPREADTNQKSEPSSPELETLSTQTRSP. Positions 542–552 are enriched in acidic residues; sequence EIPDDTAESSD. The span at 553-562 shows a compositional bias: basic and acidic residues; it reads DTPREADTNQ. Over residues 564 to 576 the composition is skewed to low complexity; sequence SEPSSPELETLST. The (+)RNA virus helicase ATP-binding domain maps to 682 to 838; it reads IVNADCVISN…TIIPDETDTA (157 aa). Positions 711–975 are ATP-dependent helicase; sequence LVDGVAGCGK…VTRHKKTFRY (265 aa). 714–721 lines the ATP pocket; it reads GVAGCGKT. The (+)RNA virus helicase C-terminal domain maps to 839–993; sequence DTTFRSPQDV…DLIAECLARV (155 aa).

It belongs to the bromoviridae replication protein 1a family. In terms of assembly, interacts with RNA-directed RNA polymerase 2a.

Its subcellular location is the host endoplasmic reticulum membrane. Its function is as follows. Involved in the virus replication. Contains a helicase domain and a methyltransferase domain. The methyltransferase domain is probably involved in viral RNA capping. Involved in the formation of ER membrane spherular invaginations in which RNA replication complexes form. This is Replication protein 1a from Canna (Florist's daisy).